Reading from the N-terminus, the 304-residue chain is N-acetyl-D-glucosamine kinase (304 aa).

ATP contacts are provided by residues 4 to 11 and 133 to 140; these read GFDMGGTK and GVGGGLIV. 4 residues coordinate Zn(2+): H157, C177, C179, and C184.

Belongs to the ROK (NagC/XylR) family. NagK subfamily.

It catalyses the reaction N-acetyl-D-glucosamine + ATP = N-acetyl-D-glucosamine 6-phosphate + ADP + H(+). Its pathway is cell wall biogenesis; peptidoglycan recycling. In terms of biological role, catalyzes the phosphorylation of N-acetyl-D-glucosamine (GlcNAc) derived from cell-wall degradation, yielding GlcNAc-6-P. The polypeptide is N-acetyl-D-glucosamine kinase (Yersinia pseudotuberculosis serotype O:1b (strain IP 31758)).